A 114-amino-acid polypeptide reads, in one-letter code: BolA-like protein DDB_G0274169 (114 aa).

Positions 88-98 (TQWKKNNQTKI) are enriched in polar residues. Positions 88 to 114 (TQWKKNNQTKINVDDDKSPSCKGGFGK) are disordered.

This sequence belongs to the BolA/IbaG family.

This Dictyostelium discoideum (Social amoeba) protein is BolA-like protein DDB_G0274169.